We begin with the raw amino-acid sequence, 180 residues long: MALSREETARRYGTAIFDFAKDSGKTELMYSELTELKKAVQAEPRFVQVLSNPVLDAKQKKSLLTAVEQGFSAELQEVLNFLLSYDRFDNLVDIIDYYIHLYNAANHIGTGVAKTALKPDEDQLQRLADSYAKKYGLQALHLENEVDPEIIGGVVLEVEGRVIDGSVKHRLEKIRAMLTK.

The protein belongs to the ATPase delta chain family. F-type ATPases have 2 components, F(1) - the catalytic core - and F(0) - the membrane proton channel. F(1) has five subunits: alpha(3), beta(3), gamma(1), delta(1), epsilon(1). F(0) has three main subunits: a(1), b(2) and c(10-14). The alpha and beta chains form an alternating ring which encloses part of the gamma chain. F(1) is attached to F(0) by a central stalk formed by the gamma and epsilon chains, while a peripheral stalk is formed by the delta and b chains.

It localises to the cell membrane. F(1)F(0) ATP synthase produces ATP from ADP in the presence of a proton or sodium gradient. F-type ATPases consist of two structural domains, F(1) containing the extramembraneous catalytic core and F(0) containing the membrane proton channel, linked together by a central stalk and a peripheral stalk. During catalysis, ATP synthesis in the catalytic domain of F(1) is coupled via a rotary mechanism of the central stalk subunits to proton translocation. Functionally, this protein is part of the stalk that links CF(0) to CF(1). It either transmits conformational changes from CF(0) to CF(1) or is implicated in proton conduction. This is ATP synthase subunit delta from Lactobacillus delbrueckii subsp. bulgaricus (strain ATCC BAA-365 / Lb-18).